The following is a 516-amino-acid chain: rRNA N(6)-adenosine-methyltransferase ZCCHC4 (516 aa).

Positions 40, 42, 66, 75, 127, 130, 142, and 145 each coordinate Zn(2+). The GRF-type zinc-finger motif lies at 40-84 (CPHELGPTLLFVKVNQGKEETRRFYACSACRDRKDCNFFQWEDEK). S-adenosyl-L-methionine is bound by residues 174-177 (QYLF), R204, D227, 245-246 (NM), and D278. The segment at 339 to 360 (QVVDYDNHALYKHGKTGRKQSP) is regulatory loop. The Zn(2+) site is built by C383, C386, H396, C397, C400, C403, H413, C414, C417, C420, H427, C428, C431, C434, H439, and C441. A DHHC domain is found at 398–448 (EHCNSCTSKDGRKWNHCFLCKKCVKPSWIHCSICNHCALPDHSCKGPKDGC). Residues 446 to 463 (DGCFICGELDHKRSACPN) form a CCHC-type zinc finger. A compositionally biased stretch (basic residues) spans 472–484 (KAVRKQKQRKSNK). A disordered region spans residues 472–516 (KAVRKQKQRKSNKMKMETTKGQSMNHTSATRKKKRRERTHQYLCS). Residues 490–499 (TKGQSMNHTS) are compositionally biased toward polar residues. Over residues 500-509 (ATRKKKRRER) the composition is skewed to basic residues.

This sequence belongs to the ZCCHC4 family. Interacts with components of the ASC-1 complex TRIP4, ASCC1, ASCC2 and ASCC3. Interact with AHCYL1 and AHCYL2. Interact with YTHDC2.

The protein localises to the cytoplasm. It localises to the nucleus. It is found in the nucleolus. It catalyses the reaction adenosine(4220) in 28S rRNA + S-adenosyl-L-methionine = N(6)-methyladenosine(4220) in 28S rRNA + S-adenosyl-L-homocysteine + H(+). Functionally, rRNA N6-methyltransferase that specifically methylates the adenine in position 4220 of 28S rRNA. N6-methylation of adenine(4220) in 28S rRNA is required for translation. The chain is rRNA N(6)-adenosine-methyltransferase ZCCHC4 from Bos taurus (Bovine).